Consider the following 481-residue polypeptide: 3-isopropylmalate dehydratase large subunit (481 aa).

Residues cysteine 357, cysteine 417, and cysteine 420 each coordinate [4Fe-4S] cluster. The span at 429–441 shows a compositional bias: polar residues; that stretch reads SPGQRCASTSNRN. Residues 429 to 451 form a disordered region; sequence SPGQRCASTSNRNFEGRQGKGGR.

This sequence belongs to the aconitase/IPM isomerase family. LeuC type 1 subfamily. Heterodimer of LeuC and LeuD. The cofactor is [4Fe-4S] cluster.

The enzyme catalyses (2R,3S)-3-isopropylmalate = (2S)-2-isopropylmalate. Its pathway is amino-acid biosynthesis; L-leucine biosynthesis; L-leucine from 3-methyl-2-oxobutanoate: step 2/4. Functionally, catalyzes the isomerization between 2-isopropylmalate and 3-isopropylmalate, via the formation of 2-isopropylmaleate. In Mycobacterium sp. (strain KMS), this protein is 3-isopropylmalate dehydratase large subunit.